Reading from the N-terminus, the 179-residue chain is MKTIEVDEDLYRFIAGQTERIGESASDILRRLLLVDNQGTVPIEEIVEPKGIVVSKEVGFTPEKFDGVKEMRSLLISDEFASLKKAIDRFMLVLSTLHKIDPLSFSEATQVKGRKRVYFADNEATLLANGNTTKPKAIPQSPFWVITNNNTSRKRQMVEQLMSRMNFQAELIEKVTGSI.

The protein belongs to the SeqA family. Homodimer. Polymerizes to form helical filaments.

The protein resides in the cytoplasm. Negative regulator of replication initiation, which contributes to regulation of DNA replication and ensures that replication initiation occurs exactly once per chromosome per cell cycle. Binds to pairs of hemimethylated GATC sequences in the oriC region, thus preventing assembly of replication proteins and re-initiation at newly replicated origins. Repression is relieved when the region becomes fully methylated. This Vibrio atlanticus (strain LGP32) (Vibrio splendidus (strain Mel32)) protein is Negative modulator of initiation of replication.